Here is a 1789-residue protein sequence, read N- to C-terminus: Mediator of RNA polymerase II transcription subunit 12 (1789 aa).

4 disordered regions span residues 1–138 (MTSR…QRRG), 156–288 (SSPT…GSSA), 1592–1656 (IGTA…GWHA), and 1707–1727 (THLN…NPTR). Composition is skewed to low complexity over residues 25–66 (SQQR…QQQQ) and 81–98 (TRNN…TLNN). The segment covering 107–124 (QDPTSIVSPADPSGSSPA) has biased composition (polar residues). Positions 220–229 (AVPDHSRREQ) are enriched in basic and acidic residues. 4 stretches are compositionally biased toward low complexity: residues 271–288 (RSSA…GSSA), 1592–1628 (IGTA…SAVS), 1647–1656 (QQAQAQGWHA), and 1707–1716 (THLNLGNNSN).

The protein belongs to the Mediator complex subunit 12 family. As to quaternary structure, component of the srb8-11 complex, which itself associates with the Mediator complex.

The protein localises to the nucleus. Its function is as follows. Component of the srb8-11 complex. The srb8-11 complex is a regulatory module of the Mediator complex which is itself involved in regulation of basal and activated RNA polymerase II-dependent transcription. The srb8-11 complex may be involved in the transcriptional repression of a subset of genes regulated by Mediator. It may inhibit the association of the Mediator complex with RNA polymerase II to form the holoenzyme complex. This Neurospora crassa (strain ATCC 24698 / 74-OR23-1A / CBS 708.71 / DSM 1257 / FGSC 987) protein is Mediator of RNA polymerase II transcription subunit 12 (srb8).